The chain runs to 435 residues: Transcription activator ACTTR (435 aa).

Residues 16–43 (CDFCTQSKLRCNKNKPSCRRCTIQQQPC) constitute a DNA-binding region (zn(2)-C6 fungal-type). Residues 48 to 89 (ARRTGRPPKRPRKANDGQEANEQHGDQDPVTSTPGGSCQQQS) are disordered. The segment covering 50 to 59 (RTGRPPKRPR) has biased composition (basic residues). Over residues 60-74 (KANDGQEANEQHGDQ) the composition is skewed to basic and acidic residues. Polar residues predominate over residues 76 to 89 (PVTSTPGGSCQQQS).

It localises to the nucleus. Transcription factor that regulates the expression of the gene clusters that mediate the biosynthesis of the host-selective toxins (HSTs) ACT-toxins responsible for brown spot of tangerine disease by the tangerine pathotype which affects tangerines and mandarins. ACT-toxins consist of three moieties, 9,10-epoxy-8-hydroxy-9-methyl-decatrienoic acid (EDA), valine and a polyketide. ACT-toxin I is toxic to both citrus and pear; toxin II the 5''-deoxy derivative of ACT-toxin I, is highly toxic to pear and slightly toxic to citrus. On cellular level, ACT-toxins affect plasma membrane of susceptible cells and cause a sudden increase in loss of K(+) after a few minutes of toxin treatment. The polypeptide is Transcription activator ACTTR (Alternaria alternata (Alternaria rot fungus)).